We begin with the raw amino-acid sequence, 156 residues long: Arginine repressor (156 aa).

The protein belongs to the ArgR family.

The protein resides in the cytoplasm. Its pathway is amino-acid biosynthesis; L-arginine biosynthesis [regulation]. Regulates arginine biosynthesis genes. The chain is Arginine repressor from Salmonella agona (strain SL483).